Reading from the N-terminus, the 385-residue chain is GDP-D-glucose phosphorylase 1 (385 aa).

H218 functions as the Tele-GMP-histidine intermediate in the catalytic mechanism.

The protein belongs to the GDPGP1 family.

The protein localises to the cytoplasm. It catalyses the reaction GDP-alpha-D-glucose + phosphate = alpha-D-glucose 1-phosphate + GDP + H(+). In terms of biological role, specific and highly efficient GDP-D-glucose phosphorylase regulating the levels of GDP-D-glucose in cells. The sequence is that of GDP-D-glucose phosphorylase 1 (GDPGP1) from Bos taurus (Bovine).